A 348-amino-acid polypeptide reads, in one-letter code: GTPase Obg (348 aa).

The 159-residue stretch at 1–159 (MKFLDQAKIY…KTIILRLKLI (159 aa)) folds into the Obg domain. Residues 160–327 (ADAGLVGLPN…VLRLAADEIW (168 aa)) enclose the OBG-type G domain. GTP-binding positions include 166-173 (GLPNAGKS), 191-195 (FTTLT), 212-215 (DIPG), 279-282 (NKMD), and 308-310 (SGV). 2 residues coordinate Mg(2+): Ser173 and Thr193.

This sequence belongs to the TRAFAC class OBG-HflX-like GTPase superfamily. OBG GTPase family. As to quaternary structure, monomer. Mg(2+) serves as cofactor.

It is found in the cytoplasm. Functionally, an essential GTPase which binds GTP, GDP and possibly (p)ppGpp with moderate affinity, with high nucleotide exchange rates and a fairly low GTP hydrolysis rate. Plays a role in control of the cell cycle, stress response, ribosome biogenesis and in those bacteria that undergo differentiation, in morphogenesis control. The chain is GTPase Obg from Parvibaculum lavamentivorans (strain DS-1 / DSM 13023 / NCIMB 13966).